The chain runs to 79 residues: MSNKGQLLQDPFLNALRKEHVPVSIYLVNGIKLQGNIESFDQYVVLLRNTVTQMVYKHAISTVVPARPVNFHPDAEAAS.

Residues 10-69 form the Sm domain; sequence DPFLNALRKEHVPVSIYLVNGIKLQGNIESFDQYVVLLRNTVTQMVYKHAISTVVPARPV.

Belongs to the Hfq family. In terms of assembly, homohexamer.

In terms of biological role, RNA chaperone that binds small regulatory RNA (sRNAs) and mRNAs to facilitate mRNA translational regulation in response to envelope stress, environmental stress and changes in metabolite concentrations. Also binds with high specificity to tRNAs. This is RNA-binding protein Hfq from Burkholderia mallei (strain ATCC 23344).